Reading from the N-terminus, the 337-residue chain is WAT1-related protein At1g11460 (337 aa).

Helical transmembrane passes span 14 to 34 (WPPI…NALV), 46 to 66 (IIGA…AYIL), 83 to 103 (FISG…GLSY), 107 to 127 (TVAC…ALIL), 139 to 159 (AGMI…FLTF), 188 to 208 (WLLG…WILF), 220 to 240 (FSST…LSLY), 254 to 274 (FVIG…TVSV), 284 to 304 (VFVS…DFII), and 309 to 329 (LYLG…VFLW). An EamA 1 domain is found at 27-157 (MGSVNALVKK…IICISGALFL (131 aa)). Positions 220 to 328 (FSSTCLMSIF…GTITGLYVFL (109 aa)) constitute an EamA 2 domain.

Belongs to the drug/metabolite transporter (DMT) superfamily. Plant drug/metabolite exporter (P-DME) (TC 2.A.7.4) family.

Its subcellular location is the membrane. This Arabidopsis thaliana (Mouse-ear cress) protein is WAT1-related protein At1g11460.